The sequence spans 137 residues: Phospholipase A2 group V (137 aa).

Positions 1-20 (MKRLLTLAWFLACSVPAVPG) are cleaved as a signal peptide. 6 disulfides stabilise this stretch: Cys-46–Cys-137, Cys-48–Cys-64, Cys-63–Cys-117, Cys-70–Cys-110, Cys-79–Cys-103, and Cys-97–Cys-108. Residues Tyr-47, Gly-49, and Gly-51 each contribute to the Ca(2+) site. Residue His-67 is part of the active site. Ca(2+) is bound at residue Asp-68. The active site involves Asp-111.

This sequence belongs to the phospholipase A2 family. It depends on Ca(2+) as a cofactor. In terms of processing, this enzyme lacks one of the seven disulfide bonds found in similar PA2 proteins.

It is found in the secreted. Its subcellular location is the cell membrane. It localises to the cytoplasmic vesicle. The protein localises to the phagosome. The protein resides in the recycling endosome. It is found in the golgi apparatus. Its subcellular location is the cis-Golgi network. It localises to the trans-Golgi network. The catalysed reaction is a 1,2-diacyl-sn-glycero-3-phosphocholine + H2O = a 1-acyl-sn-glycero-3-phosphocholine + a fatty acid + H(+). It carries out the reaction 1-hexadecanoyl-2-(9Z-octadecenoyl)-sn-glycero-3-phosphocholine + H2O = 1-hexadecanoyl-sn-glycero-3-phosphocholine + (9Z)-octadecenoate + H(+). The enzyme catalyses 1-hexadecanoyl-2-(5Z,8Z,11Z,14Z-eicosatetraenoyl)-sn-glycero-3-phosphocholine + H2O = 1-hexadecanoyl-sn-glycero-3-phosphocholine + (5Z,8Z,11Z,14Z)-eicosatetraenoate + H(+). It catalyses the reaction 1-hexadecanoyl-2-(9Z,12Z-octadecadienoyl)-sn-glycero-3-phosphoethanolamine + H2O = 1-hexadecanoyl-sn-glycero-3-phosphoethanolamine + (9Z,12Z)-octadecadienoate + H(+). The catalysed reaction is 1-hexadecanoyl-2-(5Z,8Z,11Z,14Z-eicosatetraenoyl)-sn-glycero-3-phosphoethanolamine + H2O = 1-hexadecanoyl-sn-glycero-3-phosphoethanolamine + (5Z,8Z,11Z,14Z)-eicosatetraenoate + H(+). It carries out the reaction 1-octadecanoyl-2-(5Z,8Z,11Z,14Z-eicosatetraenoyl)-sn-glycero-3-phospho-(1D-myo-inositol) + H2O = 1-octadecanoyl-sn-glycero-3-phospho-(1D-myo-inositol) + (5Z,8Z,11Z,14Z)-eicosatetraenoate + H(+). The enzyme catalyses 1-hexadecanoyl-2-(9Z-octadecenoyl)-sn-glycero-3-phosphoglycerol + H2O = 1-hexadecanoyl-sn-glycero-3-phosphoglycerol + (9Z)-octadecenoate + H(+). It catalyses the reaction N-hexadecanoyl-1,2-di-(9Z-octadecenoyl)-sn-glycero-3-phosphoethanolamine + H2O = N-hexadecanoyl-1-(9Z-octadecenoyl)-sn-glycero-3-phosphoethanolamine + (9Z)-octadecenoate + H(+). The catalysed reaction is 1'-[1,2-di-(9Z-octadecenoyl)-sn-glycero-3-phospho]-3'-[1-(9Z-octadecenoyl)-sn-glycero-3-phospho]-glycerol + H2O = 1',3'-bis-[1-(9Z-octadecenoyl)-sn-glycero-3-phospho]-glycerol + (9Z)-octadecenoate + H(+). It carries out the reaction 1',3'-bis[1,2-di-(9Z-octadecenoyl)-sn-glycero-3-phospho]-glycerol + H2O = 1'-[1,2-di-(9Z-octadecenoyl)-sn-glycero-3-phospho]-3'-[1-(9Z-octadecenoyl)-sn-glycero-3-phospho]-glycerol + (9Z)-octadecenoate + H(+). The protein operates within lipid metabolism; phospholipid metabolism. It functions in the pathway lipid metabolism; leukotriene B4 biosynthesis. It participates in lipid metabolism; leukotriene C4 biosynthesis. Functionally, secretory calcium-dependent phospholipase A2 that primarily targets extracellular phospholipids. Hydrolyzes the ester bond of the fatty acyl group attached at sn-2 position of phospholipids (phospholipase A2 activity), preferentially releasing fatty acyl groups with a low degree of unsaturation such as oleoyl (C18:1) and linoleoyl (C18:2) groups. Hydrolyzes low-density lipoprotein (LDL) phospholipids releasing unsaturated fatty acids that drive macrophage polarization toward an M2 phenotype. May act in an autocrine and paracrine manner. Contributes to lipid remodeling of cellular membranes at different subcellular locations and generation of lipid mediators involved in pathogen clearance. Cleaves sn-2 fatty acyl chains of cardiolipin, a major component of the inner membrane of mitochondria and bacterial membranes. Promotes phagocytosis of bacteria in macrophages through production of lysophosphatidylethanolamines. Displays bactericidal activity against Gram-positive bacteria by directly hydrolyzing phospholipids of the bacterial membrane. Promotes phagocytosis and killing of ingested fungi likely through controlling phagosome-lysosome fusion and phagosome maturation. Plays a role in biosynthesis of cysteinyl leukotrienes (CysLTs) in myeloid cells. In eosinophils, triggers perinuclear arachidonate release and LTC4 synthesis in a PLA2G4A-independent way. In neutrophils, amplifies CysLTs biosynthesis initiated by PLA2G4A. Promotes immune complex clearance in macrophages via stimulating synthesis of CysLTs, which act through CYSLTR1 to trigger phagocytosis. May regulate antigen processing in antigen-presenting cells. In pulmonary macrophages regulates IL33 production required for activation of group 2 innate lymphoid cells. May play a role in the biosynthesis of N-acyl ethanolamines that regulate energy metabolism. Hydrolyzes N-acyl phosphatidylethanolamines to N-acyl lysophosphatidylethanolamines, which are further cleaved by a lysophospholipase D to release N-acyl ethanolamines. In Rattus norvegicus (Rat), this protein is Phospholipase A2 group V (Pla2g5).